Reading from the N-terminus, the 544-residue chain is Cytochrome P450 monooxygenase tenB (544 aa).

Residues Leu-13–Trp-33 form a helical membrane-spanning segment. Positions Phe-438–Lys-448 are enriched in basic and acidic residues. Positions Phe-438–Asp-467 are disordered. Cys-486 is a binding site for heme.

The protein belongs to the cytochrome P450 family. The cofactor is heme.

It is found in the membrane. The protein operates within secondary metabolite biosynthesis. Cytochrome P450 monooxygenase; part of the gene cluster that mediates the biosynthesis of tenellin-type 2-pyridones, iron-chelating compounds involved in iron stress tolerance, competition with the natural competitor fungus Metarhizium robertsii and insect hosts infection. TenB catalyzes the selective N-hydroxylation of the 2-pyridone nitrogen of yield tellinin and 15-hydroxytellenin (15-HT), respectively. The pathway begins with the assembly of the polyketide-amino acid backbone by the hybrid PKS-NRPS tenS with the help of the enoyl reductase tenC. These enzymes catalyze the synthesis of the pyrrolidine-2-dione intermediates pretellinin A, 11-hydropretellenin A, 12-hydropretellenin A, 13-hydropretellenin A, 14-hydropretellenin A, 12-oxopretellenin A and prototellinin D. The cytochrome P450 monooxygenase tenA then catalyzes an oxidative ring expansion of pretenellin A and 14-hydropretellenin A to form the 2-pyridone core, leading to pretenellin B and pyridovericin, respectively. The cytochrome P450 monooxygenase tenB is then required for the selective N-hydroxylation of the 2-pyridone nitrogen of yield tellinin and 15-hydroxytellenin (15-HT), respectively. The UDP-glucosyltransferase GT1 and the methyltransferase MT1, located outside the tenS gene cluster, contribute to the stepwise glycosylation and methylation of 15-HT to obtain the glycoside pyridovericin-N-O-(4-O-methyl-beta-D-glucopyranoside) (PMGP). Additional related compounds such as 1-O-methyl-15-HT, (8Z)-1-O-methyl-15-HT, and O-methyltenellin A are also produced but the enzymes involved in their biosynthesis have still to be determined. This Beauveria bassiana (strain ARSEF 2860) (White muscardine disease fungus) protein is Cytochrome P450 monooxygenase tenB.